Here is a 637-residue protein sequence, read N- to C-terminus: Threonine--tRNA ligase (637 aa).

Residues 1–61 enclose the TGS domain; the sequence is MPVITLPDGS…DKDAELAIVT (61 aa). The catalytic stretch occupies residues 242–533; that stretch reads DHRKIGKKLG…LIEHYEGAFP (292 aa). The Zn(2+) site is built by C333, H384, and H510.

Belongs to the class-II aminoacyl-tRNA synthetase family. As to quaternary structure, homodimer. Zn(2+) is required as a cofactor.

It localises to the cytoplasm. It carries out the reaction tRNA(Thr) + L-threonine + ATP = L-threonyl-tRNA(Thr) + AMP + diphosphate + H(+). Its function is as follows. Catalyzes the attachment of threonine to tRNA(Thr) in a two-step reaction: L-threonine is first activated by ATP to form Thr-AMP and then transferred to the acceptor end of tRNA(Thr). Also edits incorrectly charged L-seryl-tRNA(Thr). This chain is Threonine--tRNA ligase, found in Hahella chejuensis (strain KCTC 2396).